Here is a 160-residue protein sequence, read N- to C-terminus: CST complex subunit STN1 (160 aa).

Residues 41 to 133 (VEIVGTIVSR…QITANVAVAE (93 aa)) constitute a DNA-binding region (OB).

The protein belongs to the STN1 family. Component of the CST complex, composed of CTC1, TEN1 and STN1. Interacts with CTC1. Interacts with TEN1. Interacts with POT1A. In vitro interaction with TEN1 and POT1A is mutually exclusive, indicating that POT1A and TEN1 may compete for the same binding site. As to expression, widely expressed.

The protein resides in the nucleus. The protein localises to the chromosome. It is found in the telomere. In terms of biological role, component of the CST complex, a complex that binds to single-stranded DNA and is required to protect telomeres from DNA degradation. The CST complex binds single-stranded DNA with high affinity in a sequence-independent manner, while isolated subunits bind DNA with low affinity by themselves. Associates with enzymatically active telomerase. Plays a genomewide role in DNA replication and facilitates re-replication at non-telomeric loci. The sequence is that of CST complex subunit STN1 from Arabidopsis thaliana (Mouse-ear cress).